The chain runs to 300 residues: (R)-3-hydroxydecanoyl-ACP:CoA transacylase (300 aa).

The AB hydrolase-1 domain maps to 29 to 253 (TIILVNGSLS…HTIRNAGHFI (225 aa)).

The protein operates within polyester biosynthesis; polyhydroxyalkanoate biosynthesis. Its function is as follows. Catalyzes the transfer of the acyl moiety from in vitro synthesized 3-hydroxydecanoyl-CoA to acyl carrier protein. This is (R)-3-hydroxydecanoyl-ACP:CoA transacylase (phaG) from Pseudomonas aeruginosa (strain ATCC 15692 / DSM 22644 / CIP 104116 / JCM 14847 / LMG 12228 / 1C / PRS 101 / PAO1).